We begin with the raw amino-acid sequence, 235 residues long: Probable 2-phosphosulfolactate phosphatase (235 aa).

Belongs to the ComB family. It depends on Mg(2+) as a cofactor.

It catalyses the reaction (2R)-O-phospho-3-sulfolactate + H2O = (2R)-3-sulfolactate + phosphate. The protein is Probable 2-phosphosulfolactate phosphatase of Clostridium novyi (strain NT).